A 239-amino-acid chain; its full sequence is Leucine-rich repeat-containing protein 57 (239 aa).

Gly2 carries N-myristoyl glycine lipidation. 8 LRR repeats span residues 39–60, 63–84, 86–107, 109–131, 132–153, 154–175, 177–197, and 202–222; these read NLRTIDLSNNKIESLPPLLIGK, LLKSLSLNNNKLTVLPDEICNL, KLETLSLNNNHLRELPSTFGQL, ALKTLSLSGNQLGALPPQLCSLR, HLDVMDLSKNQIRSIPDSVGEL, QVIELNLNQNQISQISVKISCC, RLKILRLEENCLELSMLPQSI, and QICLLAVEGNLFEIKKLRELE.

The protein resides in the membrane. This is Leucine-rich repeat-containing protein 57 (LRRC57) from Homo sapiens (Human).